The chain runs to 417 residues: Serine hydroxymethyltransferase (417 aa).

Residues Leu121 and 125-127 each bind (6S)-5,6,7,8-tetrahydrofolate; that span reads GHL. Lys229 is subject to N6-(pyridoxal phosphate)lysine. 355–357 contacts (6S)-5,6,7,8-tetrahydrofolate; sequence SPF.

The protein belongs to the SHMT family. As to quaternary structure, homodimer. Pyridoxal 5'-phosphate is required as a cofactor.

Its subcellular location is the cytoplasm. The catalysed reaction is (6R)-5,10-methylene-5,6,7,8-tetrahydrofolate + glycine + H2O = (6S)-5,6,7,8-tetrahydrofolate + L-serine. It functions in the pathway one-carbon metabolism; tetrahydrofolate interconversion. The protein operates within amino-acid biosynthesis; glycine biosynthesis; glycine from L-serine: step 1/1. Its function is as follows. Catalyzes the reversible interconversion of serine and glycine with tetrahydrofolate (THF) serving as the one-carbon carrier. This reaction serves as the major source of one-carbon groups required for the biosynthesis of purines, thymidylate, methionine, and other important biomolecules. Also exhibits THF-independent aldolase activity toward beta-hydroxyamino acids, producing glycine and aldehydes, via a retro-aldol mechanism. The chain is Serine hydroxymethyltransferase from Shewanella amazonensis (strain ATCC BAA-1098 / SB2B).